The chain runs to 201 residues: MICOS complex subunit MIC27 (201 aa).

The N-terminal 31 residues, 1–31 (MTQDKPIVETISNAGEQVTNVFGQFWQLVTS), are a transit peptide targeting the mitochondrion. The Cytoplasmic segment spans residues 32–117 (KNTTNNGDSK…KCNAYLTEEW (86 aa)). Residues 118 to 138 (TALPKAAAITVGGMAGFVLGL) traverse the membrane as a helical segment. The Mitochondrial intermembrane portion of the chain corresponds to 139 to 145 (KRGPVGR). The helical transmembrane segment at 146 to 166 (LLTTTIGLATMAAFCYPIEAV) threads the bilayer. At 167-201 (DVAKTGRAHAEQTWYSFQESPTPSAIVKTNLSPPK) the chain is on the cytoplasmic side.

This sequence belongs to the apolipoprotein O/MICOS complex subunit Mic27 family. As to quaternary structure, component of the mitochondrial contact site and cristae organizing system (MICOS) complex.

The protein resides in the mitochondrion outer membrane. Its function is as follows. Sustains mitochondrial morphology probably through maintaining cristae morphology. May act as a component of the MICOS complex, a large protein complex of the mitochondria. In Caenorhabditis elegans, this protein is MICOS complex subunit MIC27.